The following is a 479-amino-acid chain: Poly(A) polymerase catalytic subunit (479 aa).

Residues Asp202 and Asp204 contribute to the active site. Residues Asp202, Asp204, and Asp253 each contribute to the Ca(2+) site.

The protein belongs to the poxviridae poly(A) polymerase catalytic subunit family. Heterodimer of a large (catalytic) subunit and a small (regulatory) subunit.

The catalysed reaction is RNA(n) + ATP = RNA(n)-3'-adenine ribonucleotide + diphosphate. Its function is as follows. Polymerase that creates the 3'-poly(A) tail of mRNA's. This Mus musculus (Mouse) protein is Poly(A) polymerase catalytic subunit (OPG063).